The primary structure comprises 452 residues: Trigger factor (452 aa).

Positions 171 to 256 (GDRVKVNFKG…ATAIETPEEK (86 aa)) constitute a PPIase FKBP-type domain.

Belongs to the FKBP-type PPIase family. Tig subfamily.

The protein resides in the cytoplasm. It catalyses the reaction [protein]-peptidylproline (omega=180) = [protein]-peptidylproline (omega=0). Its function is as follows. Involved in protein export. Acts as a chaperone by maintaining the newly synthesized protein in an open conformation. Functions as a peptidyl-prolyl cis-trans isomerase. The protein is Trigger factor of Bradyrhizobium sp. (strain BTAi1 / ATCC BAA-1182).